Consider the following 273-residue polypeptide: Glutamate 5-kinase (273 aa).

Residue lysine 15 participates in ATP binding. Substrate contacts are provided by serine 55, aspartate 142, and asparagine 158. Residues 178–179 (SD) and 220–226 (TGGMLSK) contribute to the ATP site.

Belongs to the glutamate 5-kinase family.

Its subcellular location is the cytoplasm. The enzyme catalyses L-glutamate + ATP = L-glutamyl 5-phosphate + ADP. Its pathway is amino-acid biosynthesis; L-proline biosynthesis; L-glutamate 5-semialdehyde from L-glutamate: step 1/2. Its function is as follows. Catalyzes the transfer of a phosphate group to glutamate to form L-glutamate 5-phosphate. The protein is Glutamate 5-kinase of Streptococcus pyogenes serotype M4 (strain MGAS10750).